The following is a 259-amino-acid chain: (3R)-3-hydroxyacyl-CoA dehydrogenase (259 aa).

NAD(+)-binding positions include Leu13 to Ile21 and Asp40 to Leu41. A Phosphoserine modification is found at Ser58. At Lys66 the chain carries N6-acetyllysine. Ala72–Val74 contacts NAD(+). Substrate is bound at residue Ser154. Lys158 is modified (N6-succinyllysine). Tyr167 functions as the Proton acceptor in the catalytic mechanism. NAD(+)-binding positions include Tyr167 to Lys171 and Ile200 to Thr202. Lys171 is modified (N6-succinyllysine).

The protein belongs to the short-chain dehydrogenases/reductases (SDR) family. In terms of assembly, heterotetramer with CBR4; contains two molecules of HSD17B8 and CBR4. Expressed in ovary at protein level.

Its subcellular location is the mitochondrion matrix. It carries out the reaction a (3R)-3-hydroxyacyl-CoA + NAD(+) = a 3-oxoacyl-CoA + NADH + H(+). The enzyme catalyses 17beta-estradiol + NAD(+) = estrone + NADH + H(+). It catalyses the reaction testosterone + NAD(+) = androst-4-ene-3,17-dione + NADH + H(+). The catalysed reaction is 17beta-hydroxy-5alpha-androstan-3-one + NAD(+) = 5alpha-androstan-3,17-dione + NADH + H(+). The protein operates within steroid biosynthesis; estrogen biosynthesis. It participates in lipid metabolism; fatty acid biosynthesis. Its pathway is lipid metabolism; mitochondrial fatty acid beta-oxidation. Required for the solubility and assembly of the heterotetramer 3-ketoacyl-[acyl carrier protein] (ACP) reductase functional complex (KAR or KAR1) that forms part of the mitochondrial fatty acid synthase (mtFAS). Alpha-subunit of the KAR complex that acts as scaffold protein required for the stability of carbonyl reductase type-4 (CBR4, beta-subunit of the KAR complex) and for its 3-ketoacyl-ACP reductase activity, thereby participating in mitochondrial fatty acid biosynthesis. Catalyzes the NAD-dependent conversion of (3R)-3-hydroxyacyl-CoA into 3-ketoacyl-CoA (3-oxoacyl-CoA) with no chain length preference; this enzymatic activity is not needed for the KAR function. Prefers (3R)-3-hydroxyacyl-CoA over (3S)-3-hydroxyacyl-CoA and displays enzymatic activity only in the presence of NAD(+). Cooperates with enoyl-CoA hydratase 1 in mitochondria, together they constitute an alternative route to the auxiliary enzyme pathways for the breakdown of Z-PUFA (cis polyunsaturated fatty acid) enoyl-esters. NAD-dependent 17-beta-hydroxysteroid dehydrogenase with highest activity towards estradiol (17beta-estradiol or E2). Has very low activity towards testosterone and dihydrotestosterone (17beta-hydroxy-5alpha-androstan-3-one). Primarily an oxidative enzyme, it can switch to a reductive mode determined in the appropriate physiologic milieu and catalyze the reduction of estrone (E1) to form biologically active 17beta-estradiol. The sequence is that of (3R)-3-hydroxyacyl-CoA dehydrogenase (Hsd17b8) from Rattus norvegicus (Rat).